A 266-amino-acid chain; its full sequence is uncharacterized protein (266 aa).

Serine 176 carries the phosphoserine modification. Phosphothreonine is present on threonine 178.

This is an uncharacterized protein from Schizosaccharomyces pombe (strain 972 / ATCC 24843) (Fission yeast).